The primary structure comprises 142 residues: Large ribosomal subunit protein uL13 (142 aa).

This sequence belongs to the universal ribosomal protein uL13 family. Part of the 50S ribosomal subunit.

Functionally, this protein is one of the early assembly proteins of the 50S ribosomal subunit, although it is not seen to bind rRNA by itself. It is important during the early stages of 50S assembly. This is Large ribosomal subunit protein uL13 from Thermococcus kodakarensis (strain ATCC BAA-918 / JCM 12380 / KOD1) (Pyrococcus kodakaraensis (strain KOD1)).